Reading from the N-terminus, the 419-residue chain is Endothiapepsin (419 aa).

The signal sequence occupies residues 1-20 (MSSPLKNALVTAMLAGGALS). Positions 21 to 89 (SPTKQHVGIP…QNSTSGLAER (69 aa)) are cleaved as a propeptide — activation peptide. The region spanning 106-417 (YITPVQIGTP…GATTPTLGFA (312 aa)) is the Peptidase A1 domain. Catalysis depends on residues aspartate 124 and serine 288. Cysteine 344 and cysteine 379 are joined by a disulfide.

The protein belongs to the peptidase A1 family.

The enzyme catalyses Hydrolysis of proteins with specificity similar to that of pepsin A, prefers hydrophobic residues at P1 and P1', but does not cleave 14-Ala-|-Leu-15 in the B chain of insulin or Z-Glu-Tyr. Clots milk.. In Cryphonectria parasitica (Chestnut blight fungus), this protein is Endothiapepsin (EAPA).